The chain runs to 571 residues: Proline--tRNA ligase (571 aa).

It belongs to the class-II aminoacyl-tRNA synthetase family. ProS type 1 subfamily. In terms of assembly, homodimer.

Its subcellular location is the cytoplasm. It carries out the reaction tRNA(Pro) + L-proline + ATP = L-prolyl-tRNA(Pro) + AMP + diphosphate. In terms of biological role, catalyzes the attachment of proline to tRNA(Pro) in a two-step reaction: proline is first activated by ATP to form Pro-AMP and then transferred to the acceptor end of tRNA(Pro). As ProRS can inadvertently accommodate and process non-cognate amino acids such as alanine and cysteine, to avoid such errors it has two additional distinct editing activities against alanine. One activity is designated as 'pretransfer' editing and involves the tRNA(Pro)-independent hydrolysis of activated Ala-AMP. The other activity is designated 'posttransfer' editing and involves deacylation of mischarged Ala-tRNA(Pro). The misacylated Cys-tRNA(Pro) is not edited by ProRS. The protein is Proline--tRNA ligase of Mannheimia succiniciproducens (strain KCTC 0769BP / MBEL55E).